The following is a 494-amino-acid chain: V-type proton ATPase subunit B (494 aa).

R384 lines the ATP pocket.

The protein belongs to the ATPase alpha/beta chains family. As to quaternary structure, V-ATPase is a heteromultimeric enzyme made up of two complexes: the ATP-hydrolytic V1 complex and the proton translocation V0 complex. The V1 complex consists of three catalytic AB heterodimers that form a heterohexamer, three peripheral stalks each consisting of EG heterodimers, one central rotor including subunits D and F, and the regulatory subunits C and H. The proton translocation complex V0 consists of the proton transport subunit a, a ring of proteolipid subunits c9c'', rotary subunit d, subunits e and f, and the accessory subunits VhaAC45 and ATP6AP2.

Functionally, non-catalytic subunit of the V1 complex of vacuolar(H+)-ATPase (V-ATPase), a multisubunit enzyme composed of a peripheral complex (V1) that hydrolyzes ATP and a membrane integral complex (V0) that translocates protons. V-ATPase is responsible for acidifying and maintaining the pH of intracellular compartments and in some cell types, is targeted to the plasma membrane, where it is responsible for acidifying the extracellular environment. Essential for the proper assembly and activity of V-ATPase. This Manduca sexta (Tobacco hawkmoth) protein is V-type proton ATPase subunit B (VHA55).